The following is a 114-amino-acid chain: Eukaryotic translation initiation factor 6 (114 aa).

It belongs to the eIF-6 family. As to quaternary structure, monomer. Associates with the 60S ribosomal subunit.

The protein localises to the cytoplasm. Its subcellular location is the nucleus. It localises to the nucleolus. In terms of biological role, binds to the 60S ribosomal subunit and prevents its association with the 40S ribosomal subunit to form the 80S initiation complex in the cytoplasm. May also be involved in ribosome biogenesis. This is Eukaryotic translation initiation factor 6 from Trypanosoma cruzi.